We begin with the raw amino-acid sequence, 253 residues long: 5'/3'-nucleotidase SurE (253 aa).

A divalent metal cation-binding residues include D8, D9, S39, and N92.

This sequence belongs to the SurE nucleotidase family. Requires a divalent metal cation as cofactor.

The protein localises to the cytoplasm. It catalyses the reaction a ribonucleoside 5'-phosphate + H2O = a ribonucleoside + phosphate. The enzyme catalyses a ribonucleoside 3'-phosphate + H2O = a ribonucleoside + phosphate. It carries out the reaction [phosphate](n) + H2O = [phosphate](n-1) + phosphate + H(+). Functionally, nucleotidase with a broad substrate specificity as it can dephosphorylate various ribo- and deoxyribonucleoside 5'-monophosphates and ribonucleoside 3'-monophosphates with highest affinity to 3'-AMP. Also hydrolyzes polyphosphate (exopolyphosphatase activity) with the preference for short-chain-length substrates (P20-25). Might be involved in the regulation of dNTP and NTP pools, and in the turnover of 3'-mononucleotides produced by numerous intracellular RNases (T1, T2, and F) during the degradation of various RNAs. The sequence is that of 5'/3'-nucleotidase SurE from Sodalis glossinidius (strain morsitans).